The sequence spans 160 residues: Transcriptional repressor NrdR (160 aa).

A zinc finger spans residues 3 to 34 (CPFCRHADTQVVDSRVSEDGATIRRRRRCPAC). In terms of domain architecture, ATP-cone spans 49 to 139 (PSVVKKDGSR…VYRRFEDVSE (91 aa)).

The protein belongs to the NrdR family. Requires Zn(2+) as cofactor.

Its function is as follows. Negatively regulates transcription of bacterial ribonucleotide reductase nrd genes and operons by binding to NrdR-boxes. This Paraburkholderia phytofirmans (strain DSM 17436 / LMG 22146 / PsJN) (Burkholderia phytofirmans) protein is Transcriptional repressor NrdR.